We begin with the raw amino-acid sequence, 943 residues long: Isoleucine--tRNA ligase (943 aa).

A 'HIGH' region motif is present at residues Pro-58–His-68. An L-isoleucyl-5'-AMP-binding site is contributed by Glu-567. A 'KMSKS' region motif is present at residues Lys-608 to Ser-612. An ATP-binding site is contributed by Lys-611. Cys-906, Cys-909, Cys-926, and Cys-929 together coordinate Zn(2+).

Belongs to the class-I aminoacyl-tRNA synthetase family. IleS type 1 subfamily. In terms of assembly, monomer. Requires Zn(2+) as cofactor.

The protein resides in the cytoplasm. The enzyme catalyses tRNA(Ile) + L-isoleucine + ATP = L-isoleucyl-tRNA(Ile) + AMP + diphosphate. In terms of biological role, catalyzes the attachment of isoleucine to tRNA(Ile). As IleRS can inadvertently accommodate and process structurally similar amino acids such as valine, to avoid such errors it has two additional distinct tRNA(Ile)-dependent editing activities. One activity is designated as 'pretransfer' editing and involves the hydrolysis of activated Val-AMP. The other activity is designated 'posttransfer' editing and involves deacylation of mischarged Val-tRNA(Ile). This is Isoleucine--tRNA ligase from Pseudomonas putida (strain W619).